The primary structure comprises 467 residues: Squalene synthase (467 aa).

This sequence belongs to the phytoene/squalene synthase family. Mg(2+) serves as cofactor.

It catalyses the reaction 2 (2E,6E)-farnesyl diphosphate + NADPH + H(+) = squalene + 2 diphosphate + NADP(+). It carries out the reaction 2 (2E,6E)-farnesyl diphosphate + NADH + H(+) = squalene + 2 diphosphate + NAD(+). It functions in the pathway terpene metabolism; lanosterol biosynthesis; lanosterol from farnesyl diphosphate: step 1/3. Squalene synthase; part of the third module of ergosterol biosynthesis pathway that includes the late steps of the pathway. The third module or late pathway involves the ergosterol synthesis itself through consecutive reactions that mainly occur in the endoplasmic reticulum (ER) membrane. Firstly, the squalene synthase SQS catalyzes the condensation of 2 farnesyl pyrophosphate moieties to form squalene, which is the precursor of all steroids. Secondly, the squalene epoxidase catalyzes the stereospecific oxidation of squalene to (S)-2,3-epoxysqualene, which is considered to be a rate-limiting enzyme in steroid biosynthesis. Then, the lanosterol synthase LS catalyzes the cyclization of (S)-2,3 oxidosqualene to lanosterol, a reaction that forms the sterol core. In the next steps, lanosterol is transformed to ergosterol via a complex process involving various demethylation, reduction and desaturation reactions. Lanosterol is also an intermediate in the biosynthesis of triterpenes such as ganoderic acids (GA), a group of highly oxygenated lanostane-type triterpenoids which are well recognized as a main group of unique bioactive compounds in the medicinal mushroom Ganoderma lucidum. The polypeptide is Squalene synthase (Ganoderma lucidum (Ling zhi medicinal fungus)).